Reading from the N-terminus, the 142-residue chain is Large ribosomal subunit protein bL17 (142 aa).

Belongs to the bacterial ribosomal protein bL17 family. As to quaternary structure, part of the 50S ribosomal subunit. Contacts protein L32.

This is Large ribosomal subunit protein bL17 from Rickettsia bellii (strain OSU 85-389).